The primary structure comprises 352 residues: Selenide, water dikinase (352 aa).

Cys23 is an active-site residue. Residues Lys26 and Ser54–Asp56 each bind ATP. Residue Asp57 coordinates Mg(2+). Residues Asp74, Asp97, and Gly145–Ser147 each bind ATP. A Mg(2+)-binding site is contributed by Asp97. Residue Asp233 coordinates Mg(2+).

Belongs to the selenophosphate synthase 1 family. Class I subfamily. As to quaternary structure, homodimer. It depends on Mg(2+) as a cofactor.

The enzyme catalyses hydrogenselenide + ATP + H2O = selenophosphate + AMP + phosphate + 2 H(+). In terms of biological role, synthesizes selenophosphate from selenide and ATP. The protein is Selenide, water dikinase of Shewanella baltica (strain OS185).